The primary structure comprises 458 residues: NADH-ubiquinone oxidoreductase chain 4 (458 aa).

The next 12 helical transmembrane spans lie at 21–43, 58–78, 93–112, 116–138, 145–165, 196–216, 224–244, 257–277, 285–305, 309–329, 341–361, and 379–399; these read ASLW…QWLN, IDQI…LMLL, RTFI…AFSA, TLFY…RWGN, AGIY…VTIL, GLAL…HLWL, PIAG…YGIM, LSYP…SICL, LIAY…MIQT, FSGA…LFCL, ILLL…WWLL, and LTIM…TGLA.

It belongs to the complex I subunit 4 family.

Its subcellular location is the mitochondrion membrane. It carries out the reaction a ubiquinone + NADH + 5 H(+)(in) = a ubiquinol + NAD(+) + 4 H(+)(out). Core subunit of the mitochondrial membrane respiratory chain NADH dehydrogenase (Complex I) that is believed to belong to the minimal assembly required for catalysis. Complex I functions in the transfer of electrons from NADH to the respiratory chain. The immediate electron acceptor for the enzyme is believed to be ubiquinone. The sequence is that of NADH-ubiquinone oxidoreductase chain 4 (MT-ND4) from Struthio camelus (Common ostrich).